Here is a 554-residue protein sequence, read N- to C-terminus: CTP synthase (554 aa).

An amidoligase domain region spans residues 1 to 265 (MTPLIFVTGG…DEIVVNQLKL (265 aa)). Ser-13 is a binding site for CTP. Ser-13 contacts UTP. 14 to 19 (SLGKGI) provides a ligand contact to ATP. The Mg(2+) site is built by Asp-71 and Glu-139. CTP is bound by residues 146–148 (DIE), 186–191 (KTKPTQ), and Lys-222. UTP contacts are provided by residues 186 to 191 (KTKPTQ) and Lys-222. The 254-residue stretch at 292–545 (TIAVVGKYVD…IRAARERKAG (254 aa)) folds into the Glutamine amidotransferase type-1 domain. Gly-353 serves as a coordination point for L-glutamine. Cys-380 acts as the Nucleophile; for glutamine hydrolysis in catalysis. Residues 381 to 384 (YGMQ), Glu-404, and Arg-471 contribute to the L-glutamine site. Catalysis depends on residues His-518 and Glu-520.

This sequence belongs to the CTP synthase family. In terms of assembly, homotetramer.

It carries out the reaction UTP + L-glutamine + ATP + H2O = CTP + L-glutamate + ADP + phosphate + 2 H(+). It catalyses the reaction L-glutamine + H2O = L-glutamate + NH4(+). The catalysed reaction is UTP + NH4(+) + ATP = CTP + ADP + phosphate + 2 H(+). The protein operates within pyrimidine metabolism; CTP biosynthesis via de novo pathway; CTP from UDP: step 2/2. Allosterically activated by GTP, when glutamine is the substrate; GTP has no effect on the reaction when ammonia is the substrate. The allosteric effector GTP functions by stabilizing the protein conformation that binds the tetrahedral intermediate(s) formed during glutamine hydrolysis. Inhibited by the product CTP, via allosteric rather than competitive inhibition. Catalyzes the ATP-dependent amination of UTP to CTP with either L-glutamine or ammonia as the source of nitrogen. Regulates intracellular CTP levels through interactions with the four ribonucleotide triphosphates. In Stenotrophomonas maltophilia (strain K279a), this protein is CTP synthase.